A 183-amino-acid polypeptide reads, in one-letter code: Peptide deformylase (183 aa).

Fe cation-binding residues include cysteine 110 and histidine 153. Glutamate 154 is a catalytic residue. Histidine 157 contacts Fe cation.

The protein belongs to the polypeptide deformylase family. Fe(2+) serves as cofactor.

It carries out the reaction N-terminal N-formyl-L-methionyl-[peptide] + H2O = N-terminal L-methionyl-[peptide] + formate. In terms of biological role, removes the formyl group from the N-terminal Met of newly synthesized proteins. Requires at least a dipeptide for an efficient rate of reaction. N-terminal L-methionine is a prerequisite for activity but the enzyme has broad specificity at other positions. This Listeria monocytogenes serovar 1/2a (strain ATCC BAA-679 / EGD-e) protein is Peptide deformylase.